The following is a 243-amino-acid chain: 4-hydroxy-tetrahydrodipicolinate reductase (243 aa).

NAD(+) is bound by residues 9–14, 78–80, and 104–107; these read GANGKM, GTS, and APNF. The active-site Proton donor/acceptor is the H134. Residue H135 participates in (S)-2,3,4,5-tetrahydrodipicolinate binding. K138 (proton donor) is an active-site residue. 144–145 contributes to the (S)-2,3,4,5-tetrahydrodipicolinate binding site; the sequence is GT.

Belongs to the DapB family.

It localises to the cytoplasm. The catalysed reaction is (S)-2,3,4,5-tetrahydrodipicolinate + NAD(+) + H2O = (2S,4S)-4-hydroxy-2,3,4,5-tetrahydrodipicolinate + NADH + H(+). It carries out the reaction (S)-2,3,4,5-tetrahydrodipicolinate + NADP(+) + H2O = (2S,4S)-4-hydroxy-2,3,4,5-tetrahydrodipicolinate + NADPH + H(+). Its pathway is amino-acid biosynthesis; L-lysine biosynthesis via DAP pathway; (S)-tetrahydrodipicolinate from L-aspartate: step 4/4. In terms of biological role, catalyzes the conversion of 4-hydroxy-tetrahydrodipicolinate (HTPA) to tetrahydrodipicolinate. The chain is 4-hydroxy-tetrahydrodipicolinate reductase from Legionella pneumophila subsp. pneumophila (strain Philadelphia 1 / ATCC 33152 / DSM 7513).